Consider the following 372-residue polypeptide: Coxsackievirus and adenovirus receptor homolog (372 aa).

The first 22 residues, 1–22 (MDMRTSFLCVTYVILLTGSACG), serve as a signal peptide directing secretion. Ig-like C2-type domains are found at residues 23–140 (LQIT…YLLT) and 130–234 (PGIA…VTIT). The Extracellular portion of the chain corresponds to 23-241 (LQITSTGQTS…TITQPPNTAG (219 aa)). Intrachain disulfides connect C45–C124, C150–C227, and C166–C216. An N-linked (GlcNAc...) asparagine glycan is attached at N205. A helical membrane pass occupies residues 242-262 (IIAGVIICILLLLILLALILF). Residues 263–372 (CCCRARHKKK…PAQNKDGSIV (110 aa)) are Cytoplasmic-facing. Residues 286–352 (PPPKSRVSTA…PPSRMAGPNL (67 aa)) form a disordered region. The segment covering 291-317 (RVSTARSFTSVGSQRSSLGSMSPSNLH) has biased composition (polar residues). Residues 318–336 (EYSKPQYDKIPSEEYDRPP) show a composition bias toward basic and acidic residues.

As to quaternary structure, monomer. Probably homodimer formed by 2 molecules on adjacent cells.

It localises to the cell membrane. It is found in the basolateral cell membrane. The protein localises to the cell junction. The protein resides in the tight junction. Its subcellular location is the adherens junction. May function as a homophilic cell adhesion molecule and be essential for tight junction integrity. May also be involved in transepithelial migration of leukocytes through adhesive interactions with jaml. The interaction between both receptors may also mediate the activation of gamma-delta T-cells, a subpopulation of T-cells residing in epithelia and involved in tissue homeostasis and repair. This Danio rerio (Zebrafish) protein is Coxsackievirus and adenovirus receptor homolog (cxadr).